The chain runs to 155 residues: NADPH-dependent 7-cyano-7-deazaguanine reductase (155 aa).

A compositionally biased stretch (polar residues) spans 1–20 (MMPNTDVSSLSMLGQQTETA). Positions 1–26 (MMPNTDVSSLSMLGQQTETAKSPEEA) are disordered. Catalysis depends on cysteine 53, which acts as the Thioimide intermediate. The Proton donor role is filled by aspartate 60. Substrate contacts are provided by residues 75 to 77 (VES) and 94 to 95 (HE).

Belongs to the GTP cyclohydrolase I family. QueF type 1 subfamily.

The protein resides in the cytoplasm. The catalysed reaction is 7-aminomethyl-7-carbaguanine + 2 NADP(+) = 7-cyano-7-deazaguanine + 2 NADPH + 3 H(+). The protein operates within tRNA modification; tRNA-queuosine biosynthesis. Catalyzes the NADPH-dependent reduction of 7-cyano-7-deazaguanine (preQ0) to 7-aminomethyl-7-deazaguanine (preQ1). The protein is NADPH-dependent 7-cyano-7-deazaguanine reductase of Rhizobium etli (strain CIAT 652).